The following is a 331-amino-acid chain: Anthranilate phosphoribosyltransferase (331 aa).

Residues G79, 82 to 83 (GD), T87, 89 to 92 (NIST), 107 to 115 (KHGNYGATS), and A119 each bind 5-phospho-alpha-D-ribose 1-diphosphate. G79 is an anthranilate binding site. S91 provides a ligand contact to Mg(2+). An anthranilate-binding site is contributed by N110. R165 is a binding site for anthranilate. Positions 223 and 224 each coordinate Mg(2+).

This sequence belongs to the anthranilate phosphoribosyltransferase family. Homodimer. The cofactor is Mg(2+).

It catalyses the reaction N-(5-phospho-beta-D-ribosyl)anthranilate + diphosphate = 5-phospho-alpha-D-ribose 1-diphosphate + anthranilate. The protein operates within amino-acid biosynthesis; L-tryptophan biosynthesis; L-tryptophan from chorismate: step 2/5. Its function is as follows. Catalyzes the transfer of the phosphoribosyl group of 5-phosphorylribose-1-pyrophosphate (PRPP) to anthranilate to yield N-(5'-phosphoribosyl)-anthranilate (PRA). The chain is Anthranilate phosphoribosyltransferase from Bacteroides fragilis (strain YCH46).